Reading from the N-terminus, the 522-residue chain is ATP synthase subunit alpha (522 aa).

176-183 contacts ATP; that stretch reads GDRQTGKT.

The protein belongs to the ATPase alpha/beta chains family. F-type ATPases have 2 components, CF(1) - the catalytic core - and CF(0) - the membrane proton channel. CF(1) has five subunits: alpha(3), beta(3), gamma(1), delta(1), epsilon(1). CF(0) has four main subunits: a(1), b(1), b'(1) and c(9-12).

It localises to the cell membrane. It catalyses the reaction ATP + H2O + 4 H(+)(in) = ADP + phosphate + 5 H(+)(out). In terms of biological role, produces ATP from ADP in the presence of a proton gradient across the membrane. The alpha chain is a regulatory subunit. This is ATP synthase subunit alpha from Chloroflexus aurantiacus (strain ATCC 29366 / DSM 635 / J-10-fl).